The sequence spans 311 residues: Ribosomal protein L11 methyltransferase (311 aa).

S-adenosyl-L-methionine is bound by residues T163, G184, D206, and N248.

Belongs to the methyltransferase superfamily. PrmA family.

Its subcellular location is the cytoplasm. It carries out the reaction L-lysyl-[protein] + 3 S-adenosyl-L-methionine = N(6),N(6),N(6)-trimethyl-L-lysyl-[protein] + 3 S-adenosyl-L-homocysteine + 3 H(+). Its function is as follows. Methylates ribosomal protein L11. This chain is Ribosomal protein L11 methyltransferase, found in Clostridium acetobutylicum (strain ATCC 824 / DSM 792 / JCM 1419 / IAM 19013 / LMG 5710 / NBRC 13948 / NRRL B-527 / VKM B-1787 / 2291 / W).